The primary structure comprises 228 residues: MVSSTKIAQMIDHTLLKATATYADIEKLCQEAKEFNFKSVCVNPAFVPFASQLLKDSEIKVCTVIGFPLGATSTAVKAYEASWAVENGALEVDMVINIGALKAGRYEEVLEDIKEVVSAAKGKNPTVVVKVIIETCYLTDEEKIKACELAVEAGADFVKTSTGFGTGGATVEDVRLMKRTVGEKAEVKASGGIRSFADAIKMIEAGATRLGTSSGVSIMQGLVSGEDY.

The active-site Proton donor/acceptor is the aspartate 93. Lysine 159 functions as the Schiff-base intermediate with acetaldehyde in the catalytic mechanism. Catalysis depends on lysine 188, which acts as the Proton donor/acceptor.

It belongs to the DeoC/FbaB aldolase family. DeoC type 1 subfamily.

The protein localises to the cytoplasm. It catalyses the reaction 2-deoxy-D-ribose 5-phosphate = D-glyceraldehyde 3-phosphate + acetaldehyde. It participates in carbohydrate degradation; 2-deoxy-D-ribose 1-phosphate degradation; D-glyceraldehyde 3-phosphate and acetaldehyde from 2-deoxy-alpha-D-ribose 1-phosphate: step 2/2. Functionally, catalyzes a reversible aldol reaction between acetaldehyde and D-glyceraldehyde 3-phosphate to generate 2-deoxy-D-ribose 5-phosphate. The protein is Deoxyribose-phosphate aldolase of Carboxydothermus hydrogenoformans (strain ATCC BAA-161 / DSM 6008 / Z-2901).